The primary structure comprises 256 residues: Imidazole glycerol phosphate synthase subunit HisF (256 aa).

Active-site residues include D12 and D131.

Belongs to the HisA/HisF family. Heterodimer of HisH and HisF.

The protein resides in the cytoplasm. It carries out the reaction 5-[(5-phospho-1-deoxy-D-ribulos-1-ylimino)methylamino]-1-(5-phospho-beta-D-ribosyl)imidazole-4-carboxamide + L-glutamine = D-erythro-1-(imidazol-4-yl)glycerol 3-phosphate + 5-amino-1-(5-phospho-beta-D-ribosyl)imidazole-4-carboxamide + L-glutamate + H(+). The protein operates within amino-acid biosynthesis; L-histidine biosynthesis; L-histidine from 5-phospho-alpha-D-ribose 1-diphosphate: step 5/9. IGPS catalyzes the conversion of PRFAR and glutamine to IGP, AICAR and glutamate. The HisF subunit catalyzes the cyclization activity that produces IGP and AICAR from PRFAR using the ammonia provided by the HisH subunit. This Pseudomonas fluorescens (strain Pf0-1) protein is Imidazole glycerol phosphate synthase subunit HisF.